Consider the following 207-residue polypeptide: Large ribosomal subunit protein bL25 (207 aa).

Belongs to the bacterial ribosomal protein bL25 family. CTC subfamily. As to quaternary structure, part of the 50S ribosomal subunit; part of the 5S rRNA/L5/L18/L25 subcomplex. Contacts the 5S rRNA. Binds to the 5S rRNA independently of L5 and L18.

In terms of biological role, this is one of the proteins that binds to the 5S RNA in the ribosome where it forms part of the central protuberance. This Azorhizobium caulinodans (strain ATCC 43989 / DSM 5975 / JCM 20966 / LMG 6465 / NBRC 14845 / NCIMB 13405 / ORS 571) protein is Large ribosomal subunit protein bL25.